A 455-amino-acid chain; its full sequence is Anthocyanidin 3-O-glucosyltransferase (455 aa).

H18 acts as the Proton acceptor in catalysis. H18 is an an anthocyanidin binding site. Residue D118 is the Charge relay of the active site. Residue T139 participates in UDP-alpha-D-glucose binding. An an anthocyanidin-binding site is contributed by H148. The UDP-alpha-D-glucose site is built by A336, Q338, H353, W356, S358, and E361. G376 is a binding site for an anthocyanidin. The UDP-alpha-D-glucose site is built by D377 and Q378.

This sequence belongs to the UDP-glycosyltransferase family.

It carries out the reaction an anthocyanidin + UDP-alpha-D-glucose + H(+) = an anthocyanidin 3-O-beta-D-glucoside + UDP. It participates in pigment biosynthesis; anthocyanin biosynthesis. In the presence of other necessary color factors, this glycosylation reaction allows the accumulation of anthocyanin pigments. This is Anthocyanidin 3-O-glucosyltransferase (BZ1) from Hordeum vulgare (Barley).